Consider the following 115-residue polypeptide: Ribonuclease P protein component (115 aa).

This sequence belongs to the RnpA family. In terms of assembly, consists of a catalytic RNA component (M1 or rnpB) and a protein subunit.

The catalysed reaction is Endonucleolytic cleavage of RNA, removing 5'-extranucleotides from tRNA precursor.. Functionally, RNaseP catalyzes the removal of the 5'-leader sequence from pre-tRNA to produce the mature 5'-terminus. It can also cleave other RNA substrates such as 4.5S RNA. The protein component plays an auxiliary but essential role in vivo by binding to the 5'-leader sequence and broadening the substrate specificity of the ribozyme. The sequence is that of Ribonuclease P protein component from Bacillus cereus (strain B4264).